We begin with the raw amino-acid sequence, 354 residues long: NADH-quinone oxidoreductase subunit H (354 aa).

8 helical membrane-spanning segments follow: residues 22–42 (ILIRAVLIVVPVLLCVAYLIL), 91–111 (YLVAPLMVLMPAVAVWAVIPF), 124–144 (LLYVMAISSVGVYGVILAGWA), 162–182 (VSYEIAMGFALVTVLMVSGSL), 203–223 (LLSWNWLPLLPMFGVYFISGV), 250–270 (GMTFALFFLAEYINMIIISTM), 291–311 (IPGFFWLVIKVFLLLSVFIWI), and 326–346 (LGWKIFIPLTVAWLIIVAIWI).

This sequence belongs to the complex I subunit 1 family. In terms of assembly, NDH-1 is composed of 14 different subunits. Subunits NuoA, H, J, K, L, M, N constitute the membrane sector of the complex.

Its subcellular location is the cell inner membrane. It carries out the reaction a quinone + NADH + 5 H(+)(in) = a quinol + NAD(+) + 4 H(+)(out). In terms of biological role, NDH-1 shuttles electrons from NADH, via FMN and iron-sulfur (Fe-S) centers, to quinones in the respiratory chain. The immediate electron acceptor for the enzyme in this species is believed to be ubiquinone. Couples the redox reaction to proton translocation (for every two electrons transferred, four hydrogen ions are translocated across the cytoplasmic membrane), and thus conserves the redox energy in a proton gradient. This subunit may bind ubiquinone. The chain is NADH-quinone oxidoreductase subunit H from Cupriavidus metallidurans (strain ATCC 43123 / DSM 2839 / NBRC 102507 / CH34) (Ralstonia metallidurans).